The sequence spans 359 residues: Protein mab-21-like 2-B (359 aa).

Belongs to the mab-21 family.

It localises to the nucleus. The protein resides in the cytoplasm. Its function is as follows. Required for several aspects of embryonic development including normal development of the eye. In Xenopus laevis (African clawed frog), this protein is Protein mab-21-like 2-B (mab21l2-b).